Here is a 69-residue protein sequence, read N- to C-terminus: Neurotoxin Cex7 (69 aa).

Ala-1 is a signal peptide. In terms of domain architecture, LCN-type CS-alpha/beta spans 2–67 (REGYLVSKST…TYPIPGKSCG (66 aa)). 4 cysteine pairs are disulfide-bonded: Cys-13/Cys-66, Cys-17/Cys-42, Cys-26/Cys-47, and Cys-30/Cys-49. A Cysteine amide modification is found at Cys-66. A propeptide spanning residues 67-69 (GKK) is cleaved from the precursor.

This sequence belongs to the long (4 C-C) scorpion toxin superfamily. Sodium channel inhibitor family. Beta subfamily. As to expression, expressed by the venom gland.

It is found in the secreted. Beta toxins bind voltage-independently at site-4 of sodium channels (Nav) and shift the voltage of activation toward more negative potentials thereby affecting sodium channel activation and promoting spontaneous and repetitive firing. This is Neurotoxin Cex7 from Centruroides exilicauda (Bark scorpion).